Reading from the N-terminus, the 547-residue chain is Chaperonin GroEL (547 aa).

ATP-binding positions include Thr-29–Pro-32, Asp-86–Thr-90, Gly-413, Asp-478–Leu-480, and Asp-494.

The protein belongs to the chaperonin (HSP60) family. Forms a cylinder of 14 subunits composed of two heptameric rings stacked back-to-back. Interacts with the co-chaperonin GroES.

It is found in the cytoplasm. The catalysed reaction is ATP + H2O + a folded polypeptide = ADP + phosphate + an unfolded polypeptide.. Its function is as follows. Together with its co-chaperonin GroES, plays an essential role in assisting protein folding. The GroEL-GroES system forms a nano-cage that allows encapsulation of the non-native substrate proteins and provides a physical environment optimized to promote and accelerate protein folding. The polypeptide is Chaperonin GroEL (Alkaliphilus metalliredigens (strain QYMF)).